Here is a 402-residue protein sequence, read N- to C-terminus: Multidrug resistance protein MdtH (402 aa).

At 1 to 12 (MSRVSQARNLGK) the chain is on the cytoplasmic side. A helical transmembrane segment spans residues 13 to 33 (YFLLIDNMLVVLGFFVVFPLI). The Periplasmic segment spans residues 34-98 (SIRFVDQMGW…GFATMGIAHE (65 aa)). A helical membrane pass occupies residues 99–116 (PWLLWFSCLLSGLGGTLF). The Cytoplasmic segment spans residues 117–138 (DPPRSALVVKLIRPQQRGRFFS). A helical transmembrane segment spans residues 139-159 (LLMMQDSAGAVIGALLGSWLL). Residues 160–164 (QYDFR) are Periplasmic-facing. The helical transmembrane segment at 165–185 (LVCATGAVLFVLCAAFNAWLL) threads the bilayer. The Cytoplasmic portion of the chain corresponds to 186–213 (PAWKLSTVRTPVREGMTRVMRDKRFVTY). The chain crosses the membrane as a helical span at residues 214-234 (VLTLAGYYMLAVQVMLMLPIM). The Periplasmic portion of the chain corresponds to 235-243 (VNDVAGAPS). Residues 244-264 (AVKWMYAIEACLSLTLLYPIA) form a helical membrane-spanning segment. The Cytoplasmic portion of the chain corresponds to 265–276 (RWSEKHFRLEHR). A helical transmembrane segment spans residues 277–297 (LMAGLLIMSLSMMPVGMVSGL). Topologically, residues 298–299 (QQ) are periplasmic. A helical transmembrane segment spans residues 300–320 (LFTLICLFYIGSIIAEPARET). Residues 321–339 (LSASLADARARGSYMGFSR) are Cytoplasmic-facing. A helical membrane pass occupies residues 340 to 360 (LGLAIGGAIGYIGGGWLFDLG). Topologically, residues 361-367 (KSAHQPE) are periplasmic. The chain crosses the membrane as a helical span at residues 368–388 (LPWMMLGIIGIFTFLALGWQF). Topologically, residues 389 to 402 (SQKRAARRLLERDA) are cytoplasmic.

This sequence belongs to the major facilitator superfamily. DHA1 family. MdtH (TC 2.A.1.2.21) subfamily.

It localises to the cell inner membrane. In terms of biological role, confers resistance to norfloxacin and enoxacin. In Escherichia coli O139:H28 (strain E24377A / ETEC), this protein is Multidrug resistance protein MdtH.